Reading from the N-terminus, the 288-residue chain is Release factor glutamine methyltransferase (288 aa).

S-adenosyl-L-methionine is bound by residues aspartate 142 and asparagine 186. 186-189 (NPPY) contributes to the substrate binding site.

This sequence belongs to the protein N5-glutamine methyltransferase family. PrmC subfamily.

The catalysed reaction is L-glutaminyl-[peptide chain release factor] + S-adenosyl-L-methionine = N(5)-methyl-L-glutaminyl-[peptide chain release factor] + S-adenosyl-L-homocysteine + H(+). In terms of biological role, methylates the class 1 translation termination release factors RF1/PrfA and RF2/PrfB on the glutamine residue of the universally conserved GGQ motif. The chain is Release factor glutamine methyltransferase from Mycobacterium leprae (strain TN).